The sequence spans 599 residues: Sulfite reductase [NADPH] flavoprotein alpha-component (599 aa).

One can recognise a Flavodoxin-like domain in the interval Val64–Val202. FMN contacts are provided by residues Ser70–Ala75, Ser117–Gly120, and Leu153–Cys162. The region spanning Asp234–Pro448 is the FAD-binding FR-type domain. FAD contacts are provided by residues Thr322, Ala356, Arg386–Ser389, Thr404–Gly406, Tyr410, and Gly419–Ser422. NADP(+) is bound by residues Ser519 to Arg520, Lys525 to Gln529, and Asp561. Tyr599 provides a ligand contact to FAD.

This sequence belongs to the NADPH-dependent sulphite reductase flavoprotein subunit CysJ family. It in the N-terminal section; belongs to the flavodoxin family. In the C-terminal section; belongs to the flavoprotein pyridine nucleotide cytochrome reductase family. In terms of assembly, alpha(8)-beta(8). The alpha component is a flavoprotein, the beta component is a hemoprotein. It depends on FAD as a cofactor. The cofactor is FMN.

It catalyses the reaction hydrogen sulfide + 3 NADP(+) + 3 H2O = sulfite + 3 NADPH + 4 H(+). It functions in the pathway sulfur metabolism; hydrogen sulfide biosynthesis; hydrogen sulfide from sulfite (NADPH route): step 1/1. Functionally, component of the sulfite reductase complex that catalyzes the 6-electron reduction of sulfite to sulfide. This is one of several activities required for the biosynthesis of L-cysteine from sulfate. The flavoprotein component catalyzes the electron flow from NADPH -&gt; FAD -&gt; FMN to the hemoprotein component. This Salmonella paratyphi A (strain ATCC 9150 / SARB42) protein is Sulfite reductase [NADPH] flavoprotein alpha-component.